Consider the following 259-residue polypeptide: UPF0246 protein PP_1289 (259 aa).

This sequence belongs to the UPF0246 family.

This chain is UPF0246 protein PP_1289, found in Pseudomonas putida (strain ATCC 47054 / DSM 6125 / CFBP 8728 / NCIMB 11950 / KT2440).